Here is a 264-residue protein sequence, read N- to C-terminus: 3'-5' ssDNA/RNA exonuclease TatD (264 aa).

3 residues coordinate a divalent metal cation: E92, H128, and H153.

Belongs to the metallo-dependent hydrolases superfamily. TatD-type hydrolase family. TatD subfamily. Monomer. Mg(2+) is required as a cofactor.

It localises to the cytoplasm. Functionally, 3'-5' exonuclease that prefers single-stranded DNA and RNA. May play a role in the H(2)O(2)-induced DNA damage repair. The chain is 3'-5' ssDNA/RNA exonuclease TatD from Dickeya dadantii (strain 3937) (Erwinia chrysanthemi (strain 3937)).